Here is a 209-residue protein sequence, read N- to C-terminus: Ribosomal RNA large subunit methyltransferase E (209 aa).

Residues Gly-63, Trp-65, Asp-83, Asp-99, and Asp-124 each contribute to the S-adenosyl-L-methionine site. Residue Lys-164 is the Proton acceptor of the active site.

This sequence belongs to the class I-like SAM-binding methyltransferase superfamily. RNA methyltransferase RlmE family.

Its subcellular location is the cytoplasm. The catalysed reaction is uridine(2552) in 23S rRNA + S-adenosyl-L-methionine = 2'-O-methyluridine(2552) in 23S rRNA + S-adenosyl-L-homocysteine + H(+). Its function is as follows. Specifically methylates the uridine in position 2552 of 23S rRNA at the 2'-O position of the ribose in the fully assembled 50S ribosomal subunit. This Vibrio parahaemolyticus serotype O3:K6 (strain RIMD 2210633) protein is Ribosomal RNA large subunit methyltransferase E.